Consider the following 780-residue polypeptide: Replication origin-binding protein (780 aa).

The 157-residue stretch at Ser-39–Ala-195 folds into the Helicase ATP-binding domain. Ala-52–Thr-59 contacts ATP.

This sequence belongs to the herpesviridae OriBP family.

Probably involved in DNA replication. Binds the origin of replication (ori). The polypeptide is Replication origin-binding protein (U73) (Homo sapiens (Human)).